A 242-amino-acid chain; its full sequence is Methylthioribulose-1-phosphate dehydratase (242 aa).

Position 97 (Cys97) interacts with substrate. Zn(2+)-binding residues include His115 and His117. The Proton donor/acceptor role is filled by Glu139. Position 195 (His195) interacts with Zn(2+).

It belongs to the aldolase class II family. MtnB subfamily. In terms of assembly, homotetramer. Interacts with APAF1. May interact with CASP1. The cofactor is Zn(2+).

It localises to the cytoplasm. The catalysed reaction is 5-(methylsulfanyl)-D-ribulose 1-phosphate = 5-methylsulfanyl-2,3-dioxopentyl phosphate + H2O. It functions in the pathway amino-acid biosynthesis; L-methionine biosynthesis via salvage pathway; L-methionine from S-methyl-5-thio-alpha-D-ribose 1-phosphate: step 2/6. Catalyzes the dehydration of methylthioribulose-1-phosphate (MTRu-1-P) into 2,3-diketo-5-methylthiopentyl-1-phosphate (DK-MTP-1-P). Functions in the methionine salvage pathway, which plays a key role in cancer, apoptosis, microbial proliferation and inflammation. May inhibit the CASP1-related inflammatory response (pyroptosis), the CASP9-dependent apoptotic pathway and the cytochrome c-dependent and APAF1-mediated cell death. This Bos taurus (Bovine) protein is Methylthioribulose-1-phosphate dehydratase.